A 447-amino-acid chain; its full sequence is Rab GDP dissociation inhibitor alpha (447 aa).

The protein belongs to the Rab GDI family. As to quaternary structure, interacts with RHOH. Interacts with the non-phosphorylated forms of RAB1A, RAB3A, RAB5A, RAB5B, RAB5C, RAB8A, RAB8B, RAB10, RAB12, RAB35, and RAB43. As to expression, brain; predominant in neural and sensory tissues.

It localises to the cytoplasm. Its subcellular location is the golgi apparatus. The protein localises to the trans-Golgi network. In terms of biological role, regulates the GDP/GTP exchange reaction of most Rab proteins by inhibiting the dissociation of GDP from them, and the subsequent binding of GTP to them. Promotes the dissociation of GDP-bound Rab proteins from the membrane and inhibits their activation. Promotes the dissociation of RAB1A, RAB3A, RAB5A and RAB10 from membranes. The polypeptide is Rab GDP dissociation inhibitor alpha (GDI1) (Homo sapiens (Human)).